Reading from the N-terminus, the 465-residue chain is Lactaldehyde dehydrogenase (465 aa).

220–225 (GSVEVG) lines the NAD(+) pocket. Residues E240 and C274 contribute to the active site.

This sequence belongs to the aldehyde dehydrogenase family. Homotetramer.

The enzyme catalyses (S)-lactaldehyde + NAD(+) + H2O = (S)-lactate + NADH + 2 H(+). The protein operates within cofactor biosynthesis; coenzyme F420 biosynthesis. Functionally, involved in F420 biosynthesis through the oxidation of lactaldehyde to lactate. This is Lactaldehyde dehydrogenase from Methanococcus aeolicus (strain ATCC BAA-1280 / DSM 17508 / OCM 812 / Nankai-3).